The sequence spans 627 residues: MTLDISKYPTLALADKPEDLRLLPKETLTQLCDELRTYLLNSVSQSSGHLASGLGTVELTVALHYVYNTPFDQLVWDVGHQAYPHKILTGRRDRLSTIRQKDGLHPFPWREESEYDTLSVGHSSTSISAALGMAISAKKEGKNRKVVSVIGDGAITAGMAFEAMNHAGDIHNDMLVILNDNEMSISENVGALNNHLAQVLSGSLYTSIREGGKKVLSGVPPIKELVRRTEEHLKGMVVPGTMFEELGFNYIGPVDGHDVNELIKTLKNMRDLKGPQFLHIMTKKGKGYEPAEKDPIGYHGVPKFDPAHSSLPKSTSSKPTFSKIFGDFLCDMAAQDPKLMAITPAMREGSGMVRFSKEYPKQYFDVAIAEQHAVTLATGMAIAGDKPIVAIYSTFLQRGYDQLIHDVAIMDLPVMFAIDRAGLVGADGQTHQGAFDLSFMRCIPNMVIMAPSDENECRQMLYTGHQHTGPSAVRYPRGNGMGTEIQSEFTALEIGKGRIVRESKKAKDGSKVAILSFGTFLESALQTADAIDATVADMRFVKPLDEALIKQLAADHDVLVTIEENAIAGGAGAGVIEFLMQEKLLMPVLNLGLPDKFIAQGTQDELHEELGLDAKGIEKSISDYLAK.

Thiamine diphosphate-binding positions include His-80 and 121–123 (GHS). Position 152 (Asp-152) interacts with Mg(2+). Thiamine diphosphate contacts are provided by residues 153 to 154 (GA), Asn-181, Tyr-288, and Glu-370. Asn-181 is a binding site for Mg(2+).

It belongs to the transketolase family. DXPS subfamily. As to quaternary structure, homodimer. It depends on Mg(2+) as a cofactor. Thiamine diphosphate is required as a cofactor.

It carries out the reaction D-glyceraldehyde 3-phosphate + pyruvate + H(+) = 1-deoxy-D-xylulose 5-phosphate + CO2. Its pathway is metabolic intermediate biosynthesis; 1-deoxy-D-xylulose 5-phosphate biosynthesis; 1-deoxy-D-xylulose 5-phosphate from D-glyceraldehyde 3-phosphate and pyruvate: step 1/1. Catalyzes the acyloin condensation reaction between C atoms 2 and 3 of pyruvate and glyceraldehyde 3-phosphate to yield 1-deoxy-D-xylulose-5-phosphate (DXP). This Vibrio atlanticus (strain LGP32) (Vibrio splendidus (strain Mel32)) protein is 1-deoxy-D-xylulose-5-phosphate synthase.